Reading from the N-terminus, the 423-residue chain is Maltooligosaccharide ABC transporter solute-binding lipoprotein (423 aa).

The first 24 residues, 1–24 (MSSKFMKSAAVLGTATLASLLLVA), serve as a signal peptide directing secretion. The N-palmitoyl cysteine moiety is linked to residue C25. C25 carries S-diacylglycerol cysteine lipidation. Residues Y52, D77, D83, 103-104 (DR), E148, D193, N196, 251-254 (EGAG), W274, and K307 contribute to the substrate site.

It belongs to the bacterial solute-binding protein 1 family.

It localises to the cell membrane. Its function is as follows. Part of an ABC transporter complex involved in the uptake of maltodextrins. Binds glycogen-derived linear maltooligosaccharides increasing in size from maltotriose to maltooctaose with the highest affinity for maltotriose. Has a very weak affinity for maltose. Has also a very low affinity for maltotetraitol, indicating that the binding is selective for maltooligosaccharides with an intact reducing end. This Streptococcus pneumoniae serotype 4 (strain ATCC BAA-334 / TIGR4) protein is Maltooligosaccharide ABC transporter solute-binding lipoprotein.